We begin with the raw amino-acid sequence, 315 residues long: Acetyl-coenzyme A carboxylase carboxyl transferase subunit alpha (315 aa).

One can recognise a CoA carboxyltransferase C-terminal domain in the interval 39–292 (LEDKSAKLLR…GDALEQELNG (254 aa)).

Belongs to the AccA family. In terms of assembly, acetyl-CoA carboxylase is a heterohexamer composed of biotin carboxyl carrier protein (AccB), biotin carboxylase (AccC) and two subunits each of ACCase subunit alpha (AccA) and ACCase subunit beta (AccD).

The protein resides in the cytoplasm. It catalyses the reaction N(6)-carboxybiotinyl-L-lysyl-[protein] + acetyl-CoA = N(6)-biotinyl-L-lysyl-[protein] + malonyl-CoA. The protein operates within lipid metabolism; malonyl-CoA biosynthesis; malonyl-CoA from acetyl-CoA: step 1/1. Functionally, component of the acetyl coenzyme A carboxylase (ACC) complex. First, biotin carboxylase catalyzes the carboxylation of biotin on its carrier protein (BCCP) and then the CO(2) group is transferred by the carboxyltransferase to acetyl-CoA to form malonyl-CoA. This Sphingopyxis alaskensis (strain DSM 13593 / LMG 18877 / RB2256) (Sphingomonas alaskensis) protein is Acetyl-coenzyme A carboxylase carboxyl transferase subunit alpha.